The following is a 330-amino-acid chain: Aspartate--ammonia ligase (330 aa).

This sequence belongs to the class-II aminoacyl-tRNA synthetase family. AsnA subfamily.

It localises to the cytoplasm. The enzyme catalyses L-aspartate + NH4(+) + ATP = L-asparagine + AMP + diphosphate + H(+). It functions in the pathway amino-acid biosynthesis; L-asparagine biosynthesis; L-asparagine from L-aspartate (ammonia route): step 1/1. This chain is Aspartate--ammonia ligase, found in Salmonella paratyphi A (strain ATCC 9150 / SARB42).